We begin with the raw amino-acid sequence, 582 residues long: MPIRRLDPTTINRIAAGEVIERPAAAVKELVENALDAGARRIGVTIEGGGIGRIEVTDDGHGIPEAELPLAIERHATSKLTDEALVRIATLGFRGEALPSIGAAGRLTVTSRPAGQDSAARIVVDGGAVREVEPVAGPVGTCVTVEDLFHATPARRKFLRSAGSEAGSCADAVRHLALAAPAVGFSLTIDGAASFDLPPQDRRERVAAIYGRADAEKLLEIEAVREEVALRGFISPASLTRAAARHQHMVVNGRPVRDPLLRMALRLAYRERIPAGRHPLAALWLEIPAEMLDVNVHPAKAELRFATPDAVRSLMIGAVQRALATPADLAAAPSVSMPRTSWAASSPMPRYPQAESRAARGFAEAELRGLDLPPARVAPEVLPESRPDYPLGTPIAQVFDTYILAQSGDGTLVLVDQHAAHERLTEIRLRAERDSGAIPAQALLAPSVVELPAEDIARLLGAAERLAGLGLEIEAFGPGAVLVRAVPAALAKADPAALARDVADTLAESGTAMALEAKLDAVLIRMACHRSVRAGRRLAFAEMEALLRAMETTPLAQTCPHGRPTVLRLSRGDLERMFGRAG.

It belongs to the DNA mismatch repair MutL/HexB family.

Functionally, this protein is involved in the repair of mismatches in DNA. It is required for dam-dependent methyl-directed DNA mismatch repair. May act as a 'molecular matchmaker', a protein that promotes the formation of a stable complex between two or more DNA-binding proteins in an ATP-dependent manner without itself being part of a final effector complex. The polypeptide is DNA mismatch repair protein MutL (Acidiphilium cryptum (strain JF-5)).